Here is a 163-residue protein sequence, read N- to C-terminus: Shikimate kinase (163 aa).

10-15 (GVGKSS) contacts ATP. Ser14 contacts Mg(2+). Residues Asp28, Arg52, and Gly75 each contribute to the substrate site. ATP is bound at residue Arg116. Residue Arg134 participates in substrate binding. Arg151 lines the ATP pocket.

The protein belongs to the shikimate kinase family. As to quaternary structure, monomer. It depends on Mg(2+) as a cofactor.

The protein resides in the cytoplasm. It catalyses the reaction shikimate + ATP = 3-phosphoshikimate + ADP + H(+). The protein operates within metabolic intermediate biosynthesis; chorismate biosynthesis; chorismate from D-erythrose 4-phosphate and phosphoenolpyruvate: step 5/7. Functionally, catalyzes the specific phosphorylation of the 3-hydroxyl group of shikimic acid using ATP as a cosubstrate. This Streptococcus thermophilus (strain ATCC BAA-491 / LMD-9) protein is Shikimate kinase.